The sequence spans 290 residues: MGSRSRTPSPSGKRRHHKSKHKKRSKSHHDHERPSTRTDRDKSSEVNNHGRHRERDRDRERDRHRSDRHTERDYRHSPSILKSRKRSSSSSSDSQYSEQESQRSKQKRSRFKKLDEQNQMQVERLAEMERQRRAKELEQKTIEEEAAKRIEMLVKKRVEEELEKRRDEIEQEVNRRVETAKAEMEREMMLELERRREQIREEERRREEDEKQKREELEEILAENNRKIEEAQRKLAEERLAIIEEQRLMDEERQRMRKEQEKRVKEEQKVILGKNNSRPKLSFSLKPGAL.

Residues 1-10 are compositionally biased toward polar residues; that stretch reads MGSRSRTPSP. Disordered stretches follow at residues 1–137, 193–216, and 249–290; these read MGSR…AKEL, ERRR…KREE, and MDEE…PGAL. Positions 12 to 28 are enriched in basic residues; the sequence is GKRRHHKSKHKKRSKSH. Composition is skewed to basic and acidic residues over residues 29–44 and 53–76; these read HDHE…DKSS and RERD…DYRH. Residues Ser77 and Ser79 each carry the phosphoserine modification. The segment covering 88 to 99 has biased composition (low complexity); sequence SSSSSDSQYSEQ. Positions 111–269 form a coiled coil; sequence FKKLDEQNQM…QEKRVKEEQK (159 aa). Positions 124 to 137 are enriched in basic and acidic residues; the sequence is RLAEMERQRRAKEL. Over residues 249–269 the composition is skewed to basic and acidic residues; that stretch reads MDEERQRMRKEQEKRVKEEQK.

The protein belongs to the ARGLU1 family. As to quaternary structure, associates with the U1-snRNP complex; the interaction is enhanced by binding of Arglu1 to a stable intronic sequence RNA (sisRNA) produced from the Arglu1 gene by premature cleavage.

Its subcellular location is the nucleus. It is found in the nucleus speckle. In terms of biological role, post-transcriptional regulator of gene expression; modulates splicing and premature cleavage at cryptic polyadenylation sites of its own pre-mRNA through binding and regulation of the U1-snRNP complex. This Drosophila melanogaster (Fruit fly) protein is Arginine and glutamate-rich protein 1.